The following is a 60-amino-acid chain: Large ribosomal subunit protein uL30 (60 aa).

It belongs to the universal ribosomal protein uL30 family. Part of the 50S ribosomal subunit.

The polypeptide is Large ribosomal subunit protein uL30 (Moorella thermoacetica (strain ATCC 39073 / JCM 9320)).